Reading from the N-terminus, the 462-residue chain is Glutamate-1-semialdehyde 2,1-aminomutase (462 aa).

The interval 178 to 200 (DDPQRPASPRSQSSRGLPSSPGV) is disordered. The segment covering 182 to 192 (RPASPRSQSSR) has biased composition (low complexity). Lys297 bears the N6-(pyridoxal phosphate)lysine mark.

This sequence belongs to the class-III pyridoxal-phosphate-dependent aminotransferase family. HemL subfamily. In terms of assembly, homodimer. Requires pyridoxal 5'-phosphate as cofactor.

It is found in the cytoplasm. The enzyme catalyses (S)-4-amino-5-oxopentanoate = 5-aminolevulinate. The protein operates within porphyrin-containing compound metabolism; protoporphyrin-IX biosynthesis; 5-aminolevulinate from L-glutamyl-tRNA(Glu): step 2/2. The protein is Glutamate-1-semialdehyde 2,1-aminomutase (hemL) of Mycobacterium bovis (strain ATCC BAA-935 / AF2122/97).